A 256-amino-acid chain; its full sequence is MTILDSIILGAIEGFTEFLPISSTGHLIVASEFLGLEQNAINKAYEVIIQFSAILAVIFNYKDKFSIKKIDLWMKVFIAFLPLAIIGFIFSTQIKELFSLHVVAVMFIVGGVVFLIVEKFFINEDEKTIYEVEAISLKQSLIIGFAQIFALIPGTSRAGSTIIGALLVGLSRKASAEFSFLLAFPVMGAVTAYDLLKHYKDFSEANLIILGVGFVTSFVVAYLSIKLFLKFLEKFTFFFFGVYRIVFGVILLLFFN.

8 helical membrane passes run 1–21, 39–59, 70–90, 97–117, 134–154, 176–196, 205–225, and 235–255; these read MTIL…FLPI, NAIN…AVIF, IDLW…GFIF, LFSL…FLIV, AISL…LIPG, AEFS…YDLL, ANLI…YLSI, and FTFF…LLFF.

This sequence belongs to the UppP family.

It localises to the cell inner membrane. It carries out the reaction di-trans,octa-cis-undecaprenyl diphosphate + H2O = di-trans,octa-cis-undecaprenyl phosphate + phosphate + H(+). In terms of biological role, catalyzes the dephosphorylation of undecaprenyl diphosphate (UPP). Confers resistance to bacitracin. This is Undecaprenyl-diphosphatase from Sulfurimonas denitrificans (strain ATCC 33889 / DSM 1251) (Thiomicrospira denitrificans (strain ATCC 33889 / DSM 1251)).